A 307-amino-acid polypeptide reads, in one-letter code: F-box protein At5g03100 (307 aa).

Residues 8 to 54 enclose the F-box domain; it reads VDFISSLPDEILHHILANTPTKLAIRTSVLSKRWKHVWYETPSISIV.

The protein is F-box protein At5g03100 of Arabidopsis thaliana (Mouse-ear cress).